The primary structure comprises 576 residues: Arginine--tRNA ligase (576 aa).

A 'HIGH' region motif is present at residues 122–132 (PNVAKEMHVGH).

It belongs to the class-I aminoacyl-tRNA synthetase family. In terms of assembly, monomer.

Its subcellular location is the cytoplasm. The catalysed reaction is tRNA(Arg) + L-arginine + ATP = L-arginyl-tRNA(Arg) + AMP + diphosphate. This is Arginine--tRNA ligase from Pectobacterium atrosepticum (strain SCRI 1043 / ATCC BAA-672) (Erwinia carotovora subsp. atroseptica).